Consider the following 116-residue polypeptide: Cystatin (116 aa).

Residues 53-57 (QLVSG) carry the Secondary area of contact motif. Cystine bridges form between Cys-71–Cys-81 and Cys-95–Cys-115. Phosphoserine is present on Ser-80.

Belongs to the cystatin family.

The protein resides in the secreted. This protein binds tightly to and inhibits papain and cathepsin B. This is Cystatin from Coturnix japonica (Japanese quail).